The primary structure comprises 141 residues: Acetyltransferase YE1169 (141 aa).

An N-acetyltransferase domain is found at 1–141 (MEIRVFQQSD…GKRLIVDQEY (141 aa)).

This sequence belongs to the acetyltransferase family. YpeA subfamily.

The chain is Acetyltransferase YE1169 from Yersinia enterocolitica serotype O:8 / biotype 1B (strain NCTC 13174 / 8081).